The primary structure comprises 171 residues: MFRLYFFFNVICIFLAIRSAIGGEVPDATEQKINNFLASGKDSEDLSKRAAAMWFGPRLGKRTIASELHDEMMDEIDDNPLYYSGESPQRVASEIAQGTPYVVLLLTGRVLRQPQPVFYHSTTPRLGRRDASSSNENNSRPPFAPRLGRNLPFSPRLGRSFGAPVVDNFAY.

A signal peptide spans 1–22; sequence MFRLYFFFNVICIFLAIRSAIG. Positions 23 to 47 are excised as a propeptide; sequence GEVPDATEQKINNFLASGKDSEDLS. The residue at position 59 (L59) is a Leucine amide. The propeptide occupies 63–111; that stretch reads TIASELHDEMMDEIDDNPLYYSGESPQRVASEIAQGTPYVVLLLTGRVL. Residues 120 to 151 form a disordered region; sequence HSTTPRLGRRDASSSNENNSRPPFAPRLGRNL. Leucine amide is present on residues L126, L147, and L157. A propeptide spanning residues 160–171 is cleaved from the precursor; sequence SFGAPVVDNFAY.

The protein belongs to the pyrokinin family.

It localises to the secreted. In terms of biological role, a hormone that controls sex pheromone production in females and pheromone responsiveness in male. Also mediates visceral muscle contractile activity (myotropic activity). The protein is PBAN-type neuropeptides of Aedes aegypti (Yellowfever mosquito).